An 833-amino-acid polypeptide reads, in one-letter code: Urease (833 aa).

The region spanning 395 to 833 is the Urease domain; that stretch reads GALDVHVHYI…LPLTRRYFVY (439 aa). The Ni(2+) site is built by His-400 and His-402. 2 residues coordinate urea: His-402 and Ala-433. Lys-483 provides a ligand contact to Ni(2+). The residue at position 483 (Lys-483) is an N6-carboxylysine. His-485 and His-512 together coordinate urea. Residues His-512 and His-538 each coordinate Ni(2+). Residue His-586 is the Proton donor of the active site. Ni(2+) is bound at residue Asp-626. Residue Ala-629 participates in urea binding.

It in the C-terminal section; belongs to the metallo-dependent hydrolases superfamily. Urease alpha subunit family. In terms of assembly, homohexamer. Ni(2+) is required as a cofactor. Post-translationally, carboxylation allows a single lysine to coordinate two nickel ions.

It carries out the reaction urea + 2 H2O + H(+) = hydrogencarbonate + 2 NH4(+). It functions in the pathway nitrogen metabolism; urea degradation; CO(2) and NH(3) from urea (urease route): step 1/1. The urease accessory proteins URE4, URE6 and URE7 are required for urease activity, URE7 supplying nickel for the functional urease. Functionally, plays a nutritional role via nitrogen acquisition in the environment. Contributes to the central nervous system invasion by enhancing yeast sequestration within microcapillary beds (such as within the brain) during hematogenous spread, thereby facilitating blood-to-brain invasion by C.neoformans. Affects fitness within the mammalian phagosome, promoting non-lytic exocytosis while delaying intracellular replication and thus reducing phagolysosomal membrane damage, events that could facilitate cryptococcal dissemination when transported inside macrophages. Urease activity is also associated with the regulation of key intracellular metabolic pathways, including melanin biosynthesis, polyamine biosynthesis, as well as intracellular levels of proline and reactive oxygen species. The chain is Urease from Cryptococcus neoformans var. grubii serotype A (strain H99 / ATCC 208821 / CBS 10515 / FGSC 9487) (Filobasidiella neoformans var. grubii).